The following is a 391-amino-acid chain: NAD(P)H-quinone oxidoreductase subunit H, chloroplastic (391 aa).

This sequence belongs to the complex I 49 kDa subunit family. NDH is composed of at least 16 different subunits, 5 of which are encoded in the nucleus.

The protein localises to the plastid. It localises to the chloroplast thylakoid membrane. It carries out the reaction a plastoquinone + NADH + (n+1) H(+)(in) = a plastoquinol + NAD(+) + n H(+)(out). The catalysed reaction is a plastoquinone + NADPH + (n+1) H(+)(in) = a plastoquinol + NADP(+) + n H(+)(out). In terms of biological role, NDH shuttles electrons from NAD(P)H:plastoquinone, via FMN and iron-sulfur (Fe-S) centers, to quinones in the photosynthetic chain and possibly in a chloroplast respiratory chain. The immediate electron acceptor for the enzyme in this species is believed to be plastoquinone. Couples the redox reaction to proton translocation, and thus conserves the redox energy in a proton gradient. The chain is NAD(P)H-quinone oxidoreductase subunit H, chloroplastic from Mesostigma viride (Green alga).